The following is a 321-amino-acid chain: Lipoyl synthase (321 aa).

The [4Fe-4S] cluster site is built by C68, C73, C79, C94, C98, C101, and S308. The Radical SAM core domain maps to 80 to 297 (FNHGTATFMI…KEQALAMGFT (218 aa)).

This sequence belongs to the radical SAM superfamily. Lipoyl synthase family. [4Fe-4S] cluster is required as a cofactor.

The protein localises to the cytoplasm. It catalyses the reaction [[Fe-S] cluster scaffold protein carrying a second [4Fe-4S](2+) cluster] + N(6)-octanoyl-L-lysyl-[protein] + 2 oxidized [2Fe-2S]-[ferredoxin] + 2 S-adenosyl-L-methionine + 4 H(+) = [[Fe-S] cluster scaffold protein] + N(6)-[(R)-dihydrolipoyl]-L-lysyl-[protein] + 4 Fe(3+) + 2 hydrogen sulfide + 2 5'-deoxyadenosine + 2 L-methionine + 2 reduced [2Fe-2S]-[ferredoxin]. Its pathway is protein modification; protein lipoylation via endogenous pathway; protein N(6)-(lipoyl)lysine from octanoyl-[acyl-carrier-protein]: step 2/2. Its function is as follows. Catalyzes the radical-mediated insertion of two sulfur atoms into the C-6 and C-8 positions of the octanoyl moiety bound to the lipoyl domains of lipoate-dependent enzymes, thereby converting the octanoylated domains into lipoylated derivatives. This Proteus mirabilis (strain HI4320) protein is Lipoyl synthase.